Reading from the N-terminus, the 88-residue chain is Small ribosomal subunit protein uS19 (88 aa).

The protein belongs to the universal ribosomal protein uS19 family.

Its function is as follows. Protein S19 forms a complex with S13 that binds strongly to the 16S ribosomal RNA. The sequence is that of Small ribosomal subunit protein uS19 from Carsonella ruddii (strain PV).